Here is a 201-residue protein sequence, read N- to C-terminus: Large ribosomal subunit protein bL12m (201 aa).

The transit peptide at 1–38 (MLPVAASRCLWGPRLGLRGAALRLARQQMPSVCAARQL) directs the protein to the mitochondrion. Disordered stretches follow at residues 37 to 60 (QLRS…APKE) and 109 to 130 (VSAA…QKER). K128, K141, K145, and K147 each carry N6-acetyllysine. Residue K153 is modified to N6-acetyllysine; alternate. Residue K153 is modified to N6-succinyllysine; alternate. A Glycyl lysine isopeptide (Lys-Gly) (interchain with G-Cter in ubiquitin) cross-link involves residue K153. K165 bears the N6-succinyllysine mark. Residues K166 and K176 each carry the N6-acetyllysine modification. K181 is modified (N6-acetyllysine; alternate). K181 is modified (N6-succinyllysine; alternate). K188 carries the N6-acetyllysine modification.

The protein belongs to the bacterial ribosomal protein bL12 family. Component of the mitochondrial ribosome large subunit (39S) which comprises a 16S rRNA and about 50 distinct proteins. Interacts with NOA1. Post-translationally, two mature forms are produced by differential two-step proteolytic cleavage. Cleaved by the mitochondrial processing protease to produce the long mature form and subsequently by the mitochondrial intermediate protease to produce the short mature form. In the presence of CUL3, undergoes 'Lys-63'-linked ubiquitination at Lys-153 which results in proteasomal degradation.

Its subcellular location is the mitochondrion matrix. Functionally, as a component of the mitochondrial large ribosomal subunit, plays a role in mitochondrial translation. When present in mitochondria as a free protein not associated with the ribosome, associates with mitochondrial RNA polymerase POLRMT to activate transcription. Required for POLRMT stability. This is Large ribosomal subunit protein bL12m (Mrpl12) from Mus musculus (Mouse).